The chain runs to 156 residues: 6,7-dimethyl-8-ribityllumazine synthase (156 aa).

5-amino-6-(D-ribitylamino)uracil-binding positions include F23, 57–59 (AYE), and 81–83 (AII). A (2S)-2-hydroxy-3-oxobutyl phosphate-binding site is contributed by 86-87 (ST). The active-site Proton donor is H89. A 5-amino-6-(D-ribitylamino)uracil-binding site is contributed by F114. (2S)-2-hydroxy-3-oxobutyl phosphate is bound at residue R128.

This sequence belongs to the DMRL synthase family.

The enzyme catalyses (2S)-2-hydroxy-3-oxobutyl phosphate + 5-amino-6-(D-ribitylamino)uracil = 6,7-dimethyl-8-(1-D-ribityl)lumazine + phosphate + 2 H2O + H(+). The protein operates within cofactor biosynthesis; riboflavin biosynthesis; riboflavin from 2-hydroxy-3-oxobutyl phosphate and 5-amino-6-(D-ribitylamino)uracil: step 1/2. Functionally, catalyzes the formation of 6,7-dimethyl-8-ribityllumazine by condensation of 5-amino-6-(D-ribitylamino)uracil with 3,4-dihydroxy-2-butanone 4-phosphate. This is the penultimate step in the biosynthesis of riboflavin. This is 6,7-dimethyl-8-ribityllumazine synthase from Campylobacter hominis (strain ATCC BAA-381 / DSM 21671 / CCUG 45161 / LMG 19568 / NCTC 13146 / CH001A).